The chain runs to 978 residues: Exocyst complex component 5 (978 aa).

The span at 1-11 (MSWARNIQSRI) shows a compositional bias: polar residues. Disordered regions lie at residues 1–87 (MSWA…TTTQ) and 122–246 (TSPS…TTPY). Low complexity-rich tracts occupy residues 36–52 (PSSP…TSLT) and 62–86 (SQPT…TTTT). Positions 122–142 (TSPSMASPIGTSTGIQNPNAK) are enriched in polar residues. Low complexity predominate over residues 143–245 (PSSLPSPSQS…QPTPIKQTTP (103 aa)). Residues 303-325 (NTQLQLSQLESNIDRRLDDLAEE) are a coiled coil.

Belongs to the SEC10 family. As to quaternary structure, the exocyst complex is composed of sec3/exoc1, sec5/exoc2, sec6/exoc3, sec8/exoc4, sec10/exoc5, sec15/exoc6, exo70/exoc7 and exo84/exoc8.

Functionally, component of the exocyst complex involved in the docking of exocytic vesicles with fusion sites on the plasma membrane. In Dictyostelium discoideum (Social amoeba), this protein is Exocyst complex component 5 (exoc5).